The chain runs to 460 residues: Argininosuccinate lyase (460 aa).

This sequence belongs to the lyase 1 family. Argininosuccinate lyase subfamily.

Its subcellular location is the cytoplasm. It carries out the reaction 2-(N(omega)-L-arginino)succinate = fumarate + L-arginine. Its pathway is amino-acid biosynthesis; L-arginine biosynthesis; L-arginine from L-ornithine and carbamoyl phosphate: step 3/3. The polypeptide is Argininosuccinate lyase (Nitratidesulfovibrio vulgaris (strain DSM 19637 / Miyazaki F) (Desulfovibrio vulgaris)).